The following is a 236-amino-acid chain: Segregation and condensation protein A (236 aa).

This sequence belongs to the ScpA family. In terms of assembly, component of a cohesin-like complex composed of ScpA, ScpB and the Smc homodimer, in which ScpA and ScpB bind to the head domain of Smc. The presence of the three proteins is required for the association of the complex with DNA.

It is found in the cytoplasm. Functionally, participates in chromosomal partition during cell division. May act via the formation of a condensin-like complex containing Smc and ScpB that pull DNA away from mid-cell into both cell halves. The chain is Segregation and condensation protein A from Streptococcus sanguinis (strain SK36).